The sequence spans 385 residues: MEIPRQEIHIEIDNSIPSSKEFKTGLADAKPVVLMSALRSLHAGYFRISLSLCSQALLWKIMIAPESPSMSHMHSKLPSMAFHLLWYLALVTQVSLCFLYALKCIFFFDKVKEEFLHYIGVNYLYAPSISWLLMLQSAPMMEPNSVLYQTLFWIFAVPVLTLDIKLYGQWFTTEKRFLSMLANPASQVSVIANLVAARGAAEMGWNECALCMFSLGMVHYLVIFVTLYQRLPGGNNFPAKLRPIFFLFVAAPAMASLAWNSICGTFDAVAKMLFFLSLFIFMSLVCRPNLFKKSMKRFNVAWWAYSFPLTFLALDSVQYAQEVKDPVGSGLMLIFSSISVLIFLGMMVLTAANSNRLLRHDPVLGSATDPKDKQKTLSLNATNQN.

Over 1-42 the chain is Cytoplasmic; the sequence is MEIPRQEIHIEIDNSIPSSKEFKTGLADAKPVVLMSALRSLH. A helical membrane pass occupies residues 43-65; it reads AGYFRISLSLCSQALLWKIMIAP. The Extracellular segment spans residues 66 to 81; the sequence is ESPSMSHMHSKLPSMA. The helical transmembrane segment at 82–102 threads the bilayer; sequence FHLLWYLALVTQVSLCFLYAL. At 103–114 the chain is on the cytoplasmic side; the sequence is KCIFFFDKVKEE. A helical transmembrane segment spans residues 115–135; sequence FLHYIGVNYLYAPSISWLLML. Over 136–150 the chain is Extracellular; the sequence is QSAPMMEPNSVLYQT. Residues 151-171 form a helical membrane-spanning segment; sequence LFWIFAVPVLTLDIKLYGQWF. Residues 172–176 are Cytoplasmic-facing; it reads TTEKR. The helical transmembrane segment at 177–197 threads the bilayer; sequence FLSMLANPASQVSVIANLVAA. The Extracellular segment spans residues 198–207; sequence RGAAEMGWNE. Residues 208-228 traverse the membrane as a helical segment; that stretch reads CALCMFSLGMVHYLVIFVTLY. Residues 229-243 lie on the Cytoplasmic side of the membrane; it reads QRLPGGNNFPAKLRP. The chain crosses the membrane as a helical span at residues 244–264; that stretch reads IFFLFVAAPAMASLAWNSICG. Thr265 is a topological domain (extracellular). A helical membrane pass occupies residues 266-286; sequence FDAVAKMLFFLSLFIFMSLVC. Residues 287-299 are Cytoplasmic-facing; the sequence is RPNLFKKSMKRFN. The chain crosses the membrane as a helical span at residues 300–320; the sequence is VAWWAYSFPLTFLALDSVQYA. At 321-330 the chain is on the extracellular side; the sequence is QEVKDPVGSG. A helical transmembrane segment spans residues 331 to 351; it reads LMLIFSSISVLIFLGMMVLTA. The Cytoplasmic portion of the chain corresponds to 352–385; the sequence is ANSNRLLRHDPVLGSATDPKDKQKTLSLNATNQN. Positions 366–385 are disordered; the sequence is SATDPKDKQKTLSLNATNQN. Polar residues predominate over residues 376–385; sequence TLSLNATNQN.

It belongs to the SLAC1 S-type anion channel family. Homotrimer. As to expression, expressed in the vascular systems of root.

The protein localises to the cell membrane. Its function is as follows. Slow, weak voltage-dependent S-type anion efflux channel involved in maintenance of anion homeostasis. The chain is S-type anion channel SLAH1 (SLAH1) from Arabidopsis thaliana (Mouse-ear cress).